A 182-amino-acid chain; its full sequence is MLKLFRETGLRFLWISALAFILDQWSKYTVIDTMSLYQSIQVLPFFNFTYVHNYGAAFSFLENAGGWQRWFFTAIAVVVSVVILWWLKQSPRSQKMLPVAFAFILGGALGNVYDRLVHGYVIDFLDFYVNNYHWPAFNIADSAIFIGAALLIIDMFKNGDKKSEENGAESKAGSANSSETIK.

4 helical membrane passes run 12–32, 40–60, 70–90, and 97–117; these read FLWI…TVID, IQVL…AFSF, WFFT…LKQS, and LPVA…DRLV. Residues Asp-123 and Asp-141 contribute to the active site. The chain crosses the membrane as a helical span at residues 136 to 156; it reads AFNIADSAIFIGAALLIIDMF. Residues 161–182 form a disordered region; the sequence is KKSEENGAESKAGSANSSETIK. Polar residues predominate over residues 173 to 182; it reads GSANSSETIK.

This sequence belongs to the peptidase A8 family.

The protein localises to the cell inner membrane. The catalysed reaction is Release of signal peptides from bacterial membrane prolipoproteins. Hydrolyzes -Xaa-Yaa-Zaa-|-(S,diacylglyceryl)Cys-, in which Xaa is hydrophobic (preferably Leu), and Yaa (Ala or Ser) and Zaa (Gly or Ala) have small, neutral side chains.. It functions in the pathway protein modification; lipoprotein biosynthesis (signal peptide cleavage). In terms of biological role, this protein specifically catalyzes the removal of signal peptides from prolipoproteins. In Alteromonas mediterranea (strain DSM 17117 / CIP 110805 / LMG 28347 / Deep ecotype), this protein is Lipoprotein signal peptidase.